A 217-amino-acid chain; its full sequence is MVAAFSYTACTKLSLLHPSMVAQIRPRTTQKAFVVTNPEQDSTLEVQETETLKEEQSTEKMKKQPTPLRPVEKQLNVKSKGMGDFGGQWLSSVTRHVRIYAAYIDPETCEFDQSQMDKLTLILDPTEEFVWDDESCNKVYSYFQELVDHYEGAPLTEYTLRLIGSDVEHYIRKMLFDGEIQYNMDARVLNFSMGKPRVQFNTSNIEGGGDGQPQEDA.

The transit peptide at 1 to 21 (MVAAFSYTACTKLSLLHPSMV) directs the protein to the chloroplast. The segment at 48 to 67 (ETETLKEEQSTEKMKKQPTP) is disordered. Over residues 50-62 (ETLKEEQSTEKMK) the composition is skewed to basic and acidic residues.

The protein belongs to the NDH complex subunit M family. Part of the chloroplast NDH complex, composed of a mixture of chloroplast and nucleus encoded subunits. Component of the NDH subcomplex A, at least composed of ndhH, ndhI, ndhJ, ndhK, ndhL, ndhM, ndhN and ndhO.

The protein resides in the plastid. Its subcellular location is the chloroplast thylakoid membrane. The enzyme catalyses a plastoquinone + NADH + (n+1) H(+)(in) = a plastoquinol + NAD(+) + n H(+)(out). It carries out the reaction a plastoquinone + NADPH + (n+1) H(+)(in) = a plastoquinol + NADP(+) + n H(+)(out). Functionally, NDH shuttles electrons from NAD(P)H:plastoquinone, via FMN and iron-sulfur (Fe-S) centers, to quinones in the photosynthetic chain and possibly in a chloroplast respiratory chain. The immediate electron acceptor for the enzyme in this species is believed to be plastoquinone. Couples the redox reaction to proton translocation, and thus conserves the redox energy in a proton gradient. This chain is NAD(P)H-quinone oxidoreductase subunit M, chloroplastic, found in Arabidopsis thaliana (Mouse-ear cress).